The following is a 440-amino-acid chain: Transposon Ty1-A Gag polyprotein (440 aa).

4 stretches are compositionally biased toward polar residues: residues 1–23 (MESQQLSQHSPISHGSACASVTS), 48–60 (TKANSQQTTTPAS), 71–93 (SPQTAQSHSPQNGPYPQQCMMTQ), and 127–152 (QSQFPQYPSSVGTPLSTPSPESGNTF). Disordered regions lie at residues 1-93 (MESQ…MMTQ), 126-173 (PQSQ…RPPP), and 352-440 (GSRN…PETY). The span at 153 to 165 (TDSSSADSDMTST) shows a compositional bias: low complexity. The segment at 299–401 (NNGIHINNKV…NSKSKTARAH (103 aa)) is RNA-binding. Over residues 402 to 418 (NVSTSNNSPSTDNDSIS) the composition is skewed to low complexity. S416 is subject to Phosphoserine. A compositionally biased stretch (polar residues) spans 419 to 428 (KSTTEPIQLN). Residues 429–440 (NKHDLHLRPETY) are compositionally biased toward basic and acidic residues.

As to quaternary structure, homotrimer.

The protein localises to the cytoplasm. Capsid protein (CA) is the structural component of the virus-like particle (VLP), forming the shell that encapsulates the retrotransposons dimeric RNA genome. The particles are assembled from trimer-clustered units and there are holes in the capsid shells that allow for the diffusion of macromolecules. CA also has nucleocapsid-like chaperone activity, promoting primer tRNA(i)-Met annealing to the multipartite primer-binding site (PBS), dimerization of Ty1 RNA and initiation of reverse transcription. This is Transposon Ty1-A Gag polyprotein (TY1A-A) from Saccharomyces cerevisiae (strain ATCC 204508 / S288c) (Baker's yeast).